We begin with the raw amino-acid sequence, 124 residues long: Small ribosomal subunit protein uS12 (124 aa).

At D89 the chain carries 3-methylthioaspartic acid. The segment at 105 to 124 (QGVKNRKQARSRYGAKKEKS) is disordered. Positions 108 to 118 (KNRKQARSRYG) are enriched in basic residues.

It belongs to the universal ribosomal protein uS12 family. As to quaternary structure, part of the 30S ribosomal subunit. Contacts proteins S8 and S17. May interact with IF1 in the 30S initiation complex.

Functionally, with S4 and S5 plays an important role in translational accuracy. In terms of biological role, interacts with and stabilizes bases of the 16S rRNA that are involved in tRNA selection in the A site and with the mRNA backbone. Located at the interface of the 30S and 50S subunits, it traverses the body of the 30S subunit contacting proteins on the other side and probably holding the rRNA structure together. The combined cluster of proteins S8, S12 and S17 appears to hold together the shoulder and platform of the 30S subunit. The protein is Small ribosomal subunit protein uS12 of Mycobacterium avium (strain 104).